Reading from the N-terminus, the 322-residue chain is Nodulation protein D 1 (322 aa).

The 58-residue stretch at 6–63 folds into the HTH lysR-type domain; sequence LDLNLLVALDALMTERKLTAAARSINLSQPAMSAAITRLRTYFRDELFTMNGRELVPT. The segment at residues 23–42 is a DNA-binding region (H-T-H motif); sequence LTAAARSINLSQPAMSAAIT.

It belongs to the LysR transcriptional regulatory family.

Functionally, regulates the expression of the nod abcFE genes which encode other nodulation proteins. NodD is also a negative regulator of its own expression. Binds flavonoids as inducers. This Sinorhizobium fredii (strain NBRC 101917 / NGR234) protein is Nodulation protein D 1 (nodD1).